Reading from the N-terminus, the 133-residue chain is Large ribosomal subunit protein bL17 (133 aa).

Belongs to the bacterial ribosomal protein bL17 family. Part of the 50S ribosomal subunit. Contacts protein L32.

This chain is Large ribosomal subunit protein bL17, found in Thermodesulfovibrio yellowstonii (strain ATCC 51303 / DSM 11347 / YP87).